The following is a 1767-amino-acid chain: Endo-alpha-N-acetylgalactosaminidase (1767 aa).

The first 39 residues, 1–39 (MNKGLFEKRCKYSIRKFSLGVASVMIGAAFFGTSPVLAD), serve as a signal peptide directing secretion. 2 stretches are compositionally biased toward basic and acidic residues: residues 61-75 (KENDGRDFEAPKVGE) and 84-111 (DGPKTEEELLALEKEKPAEEKPKEDKPA). Disordered regions lie at residues 61-124 (KEND…VTPE) and 301-324 (VKTDNQEGVKTEDTPAEKETGPEV). Low complexity predominate over residues 112–124 (AAKPETPKTVTPE). Basic and acidic residues predominate over residues 304 to 324 (DNQEGVKTEDTPAEKETGPEV). Ca(2+) contacts are provided by aspartate 577, asparagine 579, aspartate 581, asparagine 583, and aspartate 588. The segment at 602–893 (GWEKVKDITA…DVMTKYFQHF (292 aa)) is catalytic. Aspartate 658 is a binding site for substrate. The active-site Nucleophile is aspartate 764. The active-site Proton donor/acceptor is glutamate 796. Positions 1233, 1235, 1281, 1284, and 1411 each coordinate Ca(2+). Positions 1711-1730 (LASEQGKTPDYKQEIARPET) are disordered. The segment covering 1717–1730 (KTPDYKQEIARPET) has biased composition (basic and acidic residues). The short motif at 1735–1739 (LPATG) is the LPXTG sorting signal element. Threonine 1738 carries the pentaglycyl murein peptidoglycan amidated threonine modification. The propeptide at 1739–1767 (GESQSDTALILASVSLALSALFVVKTKKD) is removed by sortase.

The protein belongs to the glycosyl hydrolase 101 family. A subfamily.

Its subcellular location is the secreted. It localises to the cell wall. It carries out the reaction a 3-O-[beta-D-galactosyl-(1-&gt;3)-N-acetyl-alpha-D-galactosaminyl]-L-threonyl-[protein] + H2O = beta-D-galactosyl-(1-&gt;3)-N-acetyl-D-galactosamine + L-threonyl-[protein]. The enzyme catalyses a 3-O-[beta-D-galactosyl-(1-&gt;3)-N-acetyl-alpha-D-galactosaminyl]-L-seryl-[protein] + H2O = beta-D-galactosyl-(1-&gt;3)-N-acetyl-D-galactosamine + L-seryl-[protein]. Its function is as follows. Involved in the breakdown of mucin-type O-linked glycans. Specifically removes the T-antigen disaccharide (Gal-beta-1,3-GalNAc-alpha) from extracellular host glycoproteins. Representative of a broadly important class of virulence factors. This Streptococcus pneumoniae serotype 4 (strain ATCC BAA-334 / TIGR4) protein is Endo-alpha-N-acetylgalactosaminidase.